Consider the following 389-residue polypeptide: Putative F-box protein At1g47790 (389 aa).

In terms of domain architecture, F-box spans 19–65 (SKPTSSFPLDLASEILLRLPVKSVVRFRCVSKLWSSIITDPYFIKTY).

This is Putative F-box protein At1g47790 from Arabidopsis thaliana (Mouse-ear cress).